Consider the following 1887-residue polypeptide: MIFQSFLLGNLVSLCMKIINSVVVVGLYYGFLTTFSIGPSYLFLLRALVMEEGTEKKVSATTGFITGQLMMFISIYYAPLHLALGRPHTITVLALPYLLFHFFWNNHKHFFDYGSTTRNSMRNLSIQCVFLNNLIFQLFNHFILPSSMLARLVNIYLFRCNNKILFVTSGFVGWLIGHILFMKWLGLVLVWIRQNHSIRSNKYIRSNKYLVLELRNSMARIFSILLFITCVYYLGRIPSPILTKKLKEASKTEERVESEEERDVEIETASEMKGTKQEQEGSTEEDPYPSPSLFSEEGWDPDKIDETEEIRVNGKDKIKDKFHSHLTETGYNNINTSNSPIYDYQDSYLNNNNTGNLENFKLQLLDKKNENQDLFWFQKPLVSLLFDYNRWNRPFRYIKNNRFEQAVRTEMSQYFFDTCKSDGKQRISFTYPPSLSTFWKMIKRKIPLLSLQKTLPNKLDTQWVSTNKEKSNNLNKEFLNRLEILDKESLSMDILETRTRLCNDDTKKEYVPKMYDPLLNGPYRGTIKKGVSSSIINNTLLENWEKRVRLNRIHTIFLPNIDYQEFEQKAYTIDKKPLSTEIDEFLTLINELGNEPKSSLNVKGLSLFSDQEQRRAKSENRTKFVKFVFNAIDPNEPKSGKKSIGIKEISKKVPRWSHKLITELDQQMGEFQDRASIDHQLRSRKAKRVVIFTDNNATNDPEEEVALISYSQQSDFRRGIIKGSMRAQRRKTFISKLFQANVHSPLFVDRITPLRLFSFDISELIKPIFRNWTGKEREFKILESREEQTKREEKKEKDKKEDNKRKEQARIAIEEAWDNIPFAQIIRGYMLITQSILRKYILLPSLIIAKNLGRMLFLQLPEWSEDLQEWNREMQIKCTYNGVQLSETEFPKDWLRDGIQIKILFPFCLKPWHISKLYPSRGELMKKKKQKDDFCFLTVWGMEAELPFGSPRKRPSFFEPIFKELEKKIGKFKKKYFLTLKILKGKTKLFRSVSKETKKWFIQSIGFLKKIKKELSKVNPIVLFRFKEISESNETKKEKDYLISNQIINESFSQIESGNWPNSSLIEKKMKDLTDRTSTIKNQIERITKEKKKVTPEIDINPNKTNNIKKLESPKKFFQILKSRNTRVIWKFHYFLKLFIQRLYIDLFLSIINIPRITTQLFLESTNKLIEKFISNNEINQEKITNKKKIHFIFISTIKKSLYNISKKNSHIFCDLSYLSQAYVFYKLSQTQVINLSKFRSVLQYNTTSCFLKTKIKDYFKKLGIFHSELKHKKLQSYRINQWKNWLRWHYQYDLSQIRWSRLMPKKWRTRVNQSCMAQNKNRNLNKWNSYEKDQLIHYKKENDSELYSLSNQKDNFKKCYRYGLLAYKSINYENKSDSFFSRLPFQVKKNLEISYNSNTSKHNFVDMPVNLHINNYLRKVNILDIERNLDRKYFDWKIIHFSLRQKGDIEAWVKIDTNSNPNTKIGINNYQIIDKIEKKGVFYLTTHQNPEKTQKNSKKVFFDWMGMNEKIFNRPILNLEFWFFPEFVLLYNVYKIKPWIIPSKFLLFNLNTNENVIQNKNQKQNFFLPSNKKIKNRSQETKEPPSQRERGSDIENKGNLSPVFSKHQTDLEKDYVESDTKKGQNKKQYKSNTEAELDLFLKRYLLFQLRWNDALNQRMLENIKVYCLLLRLINPTKITISSIQRREMSLDIMLIQANLPLTDLMKKGVLIIEPIRLSVKHNGQFIMYQTIGISLVHKSKHQTNQRYREQRYVDKKNFDEFILQPQTQRINTEKTHFDLLVPENILWSRRRRELRIRSFFNSLNWNVVDRNSVFCNETNVKNWSQFLGERKPLYKDKNELIKFKFFLWPNYRLEDLACMNRYWFDTNNGSRFSILRIHMYPRLKIN.

6 helical membrane passes run 18 to 38, 64 to 84, 87 to 107, 124 to 144, 172 to 192, and 221 to 241; these read IINS…FSIG, FITG…HLAL, PHTI…WNNH, LSIQ…HFIL, VGWL…LVWI, and IFSI…PSPI. 3 disordered regions span residues 248–300, 786–805, and 1569–1603; these read EASK…EGWD, EEQT…DNKR, and LPSN…NLSP. Residues 256 to 268 show a composition bias toward acidic residues; the sequence is VESEEERDVEIET. The stretch at 775–816 forms a coiled coil; the sequence is KEREFKILESREEQTKREEKKEKDKKEDNKRKEQARIAIEEA. The span at 1578-1597 shows a compositional bias: basic and acidic residues; it reads RSQETKEPPSQRERGSDIEN.

The protein belongs to the TIC214 family. In terms of assembly, part of the Tic complex.

It is found in the plastid. It localises to the chloroplast inner membrane. Functionally, involved in protein precursor import into chloroplasts. May be part of an intermediate translocation complex acting as a protein-conducting channel at the inner envelope. The polypeptide is Protein TIC 214 (Solanum bulbocastanum (Wild potato)).